The primary structure comprises 202 residues: Protein lin-28 homolog A (202 aa).

Residues 1–31 (MGSVSNQQFAGAKPGEEPSGDSPKAENESQP) form a disordered region. The region spanning 33–106 (HGSGICKWFN…GLESIRVTGP (74 aa)) is the CSD domain. Residues 107-130 (GGVFCIGSERRPKSKSLQKRRSKG) are flexible linker. CCHC-type zinc fingers lie at residues 131-148 (DRCYNCGGLDHHAKECKL) and 153-170 (KKCHFCQSISHMVANCPA). The Zn(2+) site is built by cysteine 133, cysteine 136, histidine 141, cysteine 146, cysteine 155, cysteine 158, histidine 163, and cysteine 168. Residues 169–202 (PAKAQQSPSSQGKPAYFREKEDMHSSALLPETRE) form a disordered region.

It belongs to the lin-28 family. Monomer.

Its subcellular location is the cytoplasm. It is found in the rough endoplasmic reticulum. It localises to the P-body. The protein resides in the stress granule. The protein localises to the nucleus. Its subcellular location is the nucleolus. Its function is as follows. RNA-binding protein that inhibits processing of pre-let-7 miRNAs and regulates translation of mRNAs that control developmental timing, pluripotency and metabolism. Seems to recognize a common structural G-quartet (G4) feature in its miRNA and mRNA targets. 'Translational enhancer' that drives specific mRNAs to polysomes and increases the efficiency of protein synthesis. Its association with the translational machinery and target mRNAs results in an increased number of initiation events per molecule of mRNA and, indirectly, in mRNA stabilization. Suppressor of microRNA (miRNA) biogenesis, including that of let-7. Binds specific target miRNA precursors (pre-miRNAs), recognizing an 5'-GGAG-3' motif found in their terminal loop, and recruits uridylyltransferase. This results in the terminal uridylation of target pre-miRNAs. Uridylated pre-miRNAs fail to be processed by Dicer and undergo degradation. Localized to the periendoplasmic reticulum area, binds to a large number of spliced mRNAs and inhibits the translation of mRNAs destined for the ER, reducing the synthesis of transmembrane proteins, ER or Golgi lumen proteins, and secretory proteins. Binds to and enhances the translation of mRNAs for several metabolic enzymes, increasing glycolysis and oxidative phosphorylation. Which, with the let-7 repression may enhance tissue repair in adult tissue. This chain is Protein lin-28 homolog A (LIN28A), found in Gallus gallus (Chicken).